Here is a 237-residue protein sequence, read N- to C-terminus: Large ribosomal subunit protein uL1 (237 aa).

It belongs to the universal ribosomal protein uL1 family. In terms of assembly, part of the 50S ribosomal subunit.

Binds directly to 23S rRNA. The L1 stalk is quite mobile in the ribosome, and is involved in E site tRNA release. Functionally, protein L1 is also a translational repressor protein, it controls the translation of the L11 operon by binding to its mRNA. The sequence is that of Large ribosomal subunit protein uL1 from Synechococcus sp. (strain ATCC 27144 / PCC 6301 / SAUG 1402/1) (Anacystis nidulans).